The sequence spans 143 residues: Transcriptional regulator MraZ (143 aa).

2 SpoVT-AbrB domains span residues 5-47 and 76-119; these read EYQH…PQDE and AAEL…STEK.

It belongs to the MraZ family. Forms oligomers.

It localises to the cytoplasm. The protein localises to the nucleoid. The polypeptide is Transcriptional regulator MraZ (Syntrophomonas wolfei subsp. wolfei (strain DSM 2245B / Goettingen)).